A 272-amino-acid chain; its full sequence is Putative B3 domain-containing protein Os02g0455900 (272 aa).

A DNA-binding region (TF-B3) is located at residues 30–134; sequence GKVLMPSDVS…RFFICCRCTC (105 aa). The tract at residues 189 to 227 is disordered; that stretch reads TASLGCAAAQPPQVPPTPTPRRRRRSMMVHPEPPEHTTD.

The protein localises to the nucleus. The chain is Putative B3 domain-containing protein Os02g0455900 from Oryza sativa subsp. japonica (Rice).